The primary structure comprises 268 residues: MGLPEVNFLRKNCILVELKLFYQTVYPPKELYWNNRITAELSTFSNIKYARPTFAVNNGTFQRTRPKLDLVLASSDIRKLATVLFNLKALIMNTKGEEPTLTTMTSVQTNEEKNDNLEQKYSSLLDRWNGKVEVHDSPFLQLQRDSNLLFAERPVRYVSTTEGEGVDISSEEFFRLEEEQCRRNYDVLVDEHSTPSVGMKDGQYGPNIIHFEPSLYHTYSSLPMSMKFWLNGLEDDETTMMNIDEKSAENLDILLHGFKGFSNKRVKG.

This sequence to baculovirus occlusion-derived virus envelope protein E27 (ODV-E27).

The protein resides in the mitochondrion. In terms of biological role, involved in splicing of intron aI5-beta of the mitochondrial COX1 transcript. The chain is Protein MSS18 (MSS18) from Saccharomyces cerevisiae (strain ATCC 204508 / S288c) (Baker's yeast).